Consider the following 255-residue polypeptide: uncharacterized protein (255 aa).

This is an uncharacterized protein from Bacillus subtilis (strain 168).